A 514-amino-acid chain; its full sequence is 2,3-bisphosphoglycerate-independent phosphoglycerate mutase (514 aa).

D14 and S64 together coordinate Mn(2+). Residue S64 is the Phosphoserine intermediate of the active site. Substrate contacts are provided by residues H125, 155–156 (RD), R187, R193, 263–266 (RADR), and K336. 5 residues coordinate Mn(2+): D403, H407, D444, H445, and H463.

It belongs to the BPG-independent phosphoglycerate mutase family. Monomer. Requires Mn(2+) as cofactor.

The catalysed reaction is (2R)-2-phosphoglycerate = (2R)-3-phosphoglycerate. Its pathway is carbohydrate degradation; glycolysis; pyruvate from D-glyceraldehyde 3-phosphate: step 3/5. Catalyzes the interconversion of 2-phosphoglycerate and 3-phosphoglycerate. The sequence is that of 2,3-bisphosphoglycerate-independent phosphoglycerate mutase from Shewanella sp. (strain ANA-3).